Reading from the N-terminus, the 498-residue chain is MSTMALHRTASTKSDTTMACPNGLVKNLPLGGNTKCSACGSHRAEKRRASSTSSVSTTPTSPSFSEADWSPLHNSSQEPQPEYTKVANSLMRAITDYVGHLQNENLPMPSLEPAADAHGVLKHPEGVAARNAVVELAQRIVAMTMDPDMNLLISSLQFHFCSSLKVAIDLKVHEHVPRRGSITSSELAAKVGADESILVRIMRALILKHVFCSPTPGTYAHTAMSWCMMKSPDAIDLLGHRLDESFRASSRQADALALVNYREPDEADVKGFSMAFGTTENFWEVLGHEGEEERAQRFNRAMRAVSLNTLDVIPRMYPFDRIRGDGLLVDVGGGLGQVARAIMGAHRGAGLRSCIVQDAHAGDDAKKQPDVMEANRKLGVELQKHNFFDPQPVKGASVYFLRHIFHDWPDRACVKILKQTVEAMGKDSTLLICDQVVDDEASPQATLYDIDMWSLFGGKERNRSEWEALFRSADERLYIKKVWTTAEAPTTMLEVCLS.

Residues 1–19 show a composition bias toward polar residues; sequence MSTMALHRTASTKSDTTMA. Disordered stretches follow at residues 1 to 23 and 42 to 83; these read MSTMALHRTASTKSDTTMACPNG and HRAE…QPEY. Positions 50–65 are enriched in low complexity; sequence SSTSSVSTTPTSPSFS. Aspartate 358 lines the S-adenosyl-L-methionine pocket. Residue histidine 406 is the Proton acceptor of the active site.

This sequence belongs to the class I-like SAM-binding methyltransferase superfamily. Cation-independent O-methyltransferase family.

It functions in the pathway secondary metabolite biosynthesis. O-methyltransferase; part of the gene cluster that mediates the biosynthesis of a tyrosine-derived cytochalasan acting as a fungal signal recognized by resistant rice plants and leads to avirulence in Pi33 resistant rice cultivars. The first step in the pathway is catalyzed by the hybrid PKS-NRPS ACE1, assisted by the enoyl reductase RAP1, that are responsible for fusion of the tyrosine precursor and the polyketide backbone. The polyketide synthase module (PKS) of ACE1 is responsible for the synthesis of the polyketide backbone and the downstream nonribosomal peptide synthetase (NRPS) amidates the carboxyl end of the polyketide with the tyrosine precursor. Because ACE1 lacks a designated enoylreductase (ER) domain, the required activity is provided the enoyl reductase RAP1. Reduction by the hydrolyase ORFZ, followed by dehydration and intra-molecular Diels-Alder cyclization by the Diels-Alderase ORF3 then yield the required isoindolone-fused macrocycle. A number of oxidative steps catalyzed by the tailoring enzymes identified within the cluster, including cytochrome P450 monooxygenases CYP1 to CYP4, the FAD-linked oxidoreductase OXR2 and the short-chain dehydrogenase/reductase OXR1, are further required to afford the final cytochalasans that confer avirulence and which have still to be identified. The monooxygenase CYP1 has been shown to be a site-selective C-18 hydroxylase whereas the function of CYP3 is the site-selective epoxidation of the C-6/C-7 olefin that is present in some intermediate compounds. Finally, SYN2 and RAP2 are not required for avirulence in Pi33 resistant rice cultivars. The protein is O-methyltransferase OME1 of Pyricularia oryzae (strain 70-15 / ATCC MYA-4617 / FGSC 8958) (Rice blast fungus).